Here is a 63-residue protein sequence, read N- to C-terminus: Large ribosomal subunit protein bL28 (63 aa).

The protein belongs to the bacterial ribosomal protein bL28 family.

The sequence is that of Large ribosomal subunit protein bL28 from Coprothermobacter proteolyticus (strain ATCC 35245 / DSM 5265 / OCM 4 / BT).